The sequence spans 246 residues: tRNA (guanine-N(1)-)-methyltransferase (246 aa).

Gly-114 lines the S-adenosyl-L-methionine pocket.

This sequence belongs to the RNA methyltransferase TrmD family. As to quaternary structure, homodimer.

The protein resides in the cytoplasm. It catalyses the reaction guanosine(37) in tRNA + S-adenosyl-L-methionine = N(1)-methylguanosine(37) in tRNA + S-adenosyl-L-homocysteine + H(+). Its function is as follows. Specifically methylates guanosine-37 in various tRNAs. The sequence is that of tRNA (guanine-N(1)-)-methyltransferase from Novosphingobium aromaticivorans (strain ATCC 700278 / DSM 12444 / CCUG 56034 / CIP 105152 / NBRC 16084 / F199).